The following is a 1364-amino-acid chain: DNA-directed RNA polymerase subunit beta' (1364 aa).

Residues 1-42 form a disordered region; sequence MTSSSSKSNKSRKSSKAAKDTTPVHESASRPLSKTPPPFRNH. The Zn(2+) site is built by cysteine 250, cysteine 317, cysteine 324, and cysteine 327.

Belongs to the RNA polymerase beta' chain family. RpoC2 subfamily. In cyanobacteria the RNAP catalytic core is composed of 2 alpha, 1 beta, 1 beta', 1 gamma and 1 omega subunit. When a sigma factor is associated with the core the holoenzyme is formed, which can initiate transcription. It depends on Zn(2+) as a cofactor.

It catalyses the reaction RNA(n) + a ribonucleoside 5'-triphosphate = RNA(n+1) + diphosphate. DNA-dependent RNA polymerase catalyzes the transcription of DNA into RNA using the four ribonucleoside triphosphates as substrates. In Parasynechococcus marenigrum (strain WH8102), this protein is DNA-directed RNA polymerase subunit beta'.